Reading from the N-terminus, the 176-residue chain is Late lactation protein A (176 aa).

The first 18 residues, M1–A18, serve as a signal peptide directing secretion. An intrachain disulfide couples C78 to C171.

It belongs to the calycin superfamily. Lipocalin family. Mammary gland specific. Secreted in milk.

The protein resides in the secreted. Functionally, probably serves a role in the transport of a small ligand released during the hydrolysis of milk fat. The sequence is that of Late lactation protein A (LLPA) from Notamacropus eugenii (Tammar wallaby).